The primary structure comprises 237 residues: NAD-dependent protein deacylase (237 aa).

The Deacetylase sirtuin-type domain occupies 1 to 235 (MRIAVLSGAG…PGLLQRLPAL (235 aa)). 8-28 (GAGISAESGVPTFRDDKNGLW) provides a ligand contact to NAD(+). Substrate-binding residues include tyrosine 53 and arginine 56. 86 to 89 (QNVD) serves as a coordination point for NAD(+). Histidine 104 (proton acceptor) is an active-site residue. Zn(2+) is bound by residues cysteine 112, cysteine 115, cysteine 138, and cysteine 140. Residues 177-179 (GTS), 203-205 (NPE), and alanine 221 contribute to the NAD(+) site.

Belongs to the sirtuin family. Class III subfamily. Zn(2+) is required as a cofactor.

The protein localises to the cytoplasm. The catalysed reaction is N(6)-acetyl-L-lysyl-[protein] + NAD(+) + H2O = 2''-O-acetyl-ADP-D-ribose + nicotinamide + L-lysyl-[protein]. It catalyses the reaction N(6)-succinyl-L-lysyl-[protein] + NAD(+) + H2O = 2''-O-succinyl-ADP-D-ribose + nicotinamide + L-lysyl-[protein]. NAD-dependent lysine deacetylase and desuccinylase that specifically removes acetyl and succinyl groups on target proteins. Modulates the activities of several proteins which are inactive in their acylated form. The chain is NAD-dependent protein deacylase from Mycolicibacterium paratuberculosis (strain ATCC BAA-968 / K-10) (Mycobacterium paratuberculosis).